Reading from the N-terminus, the 880-residue chain is Translation initiation factor IF-2 (880 aa).

Residues 1–251 (MVDTKNPGDK…PTAKPAPAKQ (251 aa)) form a disordered region. Positions 58–79 (PADAPAAPAPVAAAKPAPVRAP) are enriched in low complexity. The segment covering 115–183 (ARIRDEEERK…KRFGEEEAKK (69 aa)) has biased composition (basic and acidic residues). Composition is skewed to low complexity over residues 184–215 (AAAA…VAAD) and 233–250 (AARP…APAK). The tr-type G domain maps to 376 to 547 (PRSPVVTVMG…ALQAELLDLK (172 aa)). The G1 stretch occupies residues 385–392 (GHVDHGKT). Residue 385-392 (GHVDHGKT) participates in GTP binding. The segment at 410 to 414 (GITQH) is G2. The G3 stretch occupies residues 433–436 (DTPG). Residues 433 to 437 (DTPGH) and 487 to 490 (NKID) contribute to the GTP site. Residues 487-490 (NKID) are G4. Residues 523–525 (SAK) are G5.

It belongs to the TRAFAC class translation factor GTPase superfamily. Classic translation factor GTPase family. IF-2 subfamily.

It localises to the cytoplasm. In terms of biological role, one of the essential components for the initiation of protein synthesis. Protects formylmethionyl-tRNA from spontaneous hydrolysis and promotes its binding to the 30S ribosomal subunits. Also involved in the hydrolysis of GTP during the formation of the 70S ribosomal complex. This Rhodopseudomonas palustris (strain BisB18) protein is Translation initiation factor IF-2.